The primary structure comprises 241 residues: uncharacterized protein (241 aa).

The next 7 membrane-spanning stretches (helical) occupy residues 12-32, 39-59, 89-109, 117-137, 152-172, 180-200, and 215-235; these read ITEI…LLLL, LLWL…EMKF, VYDV…ICYT, YYTF…NCVV, LFEY…ATML, IHFY…WFVY, and YVEA…SPLI.

The protein belongs to the mimivirus L68/R809 family.

The protein resides in the membrane. This is an uncharacterized protein from Acanthamoeba polyphaga mimivirus (APMV).